Consider the following 498-residue polypeptide: Peptidase inhibitor 16 (498 aa).

The N-terminal stretch at 1–29 (MHGSCSPWVMLPPPLLLLLLLIATGPTTA) is a signal peptide. One can recognise an SCP domain in the interval 39 to 167 (VDLHNQYRAQ…ANIHLLVCNY (129 aa)). Residue Asn116 is glycosylated (N-linked (GlcNAc...) asparagine). Disordered regions lie at residues 204 to 277 (NPEK…GPSS), 317 to 407 (PKSM…SPLS), and 419 to 467 (ERGG…ENPE). 2 stretches are compositionally biased toward polar residues: residues 218–277 (VPST…GPSS) and 344–353 (LTESGESVPQ). A compositionally biased stretch (low complexity) spans 367 to 380 (PEAILPEAEAAPTE). Over residues 383 to 397 (VELREPEAESPKAES) the composition is skewed to basic and acidic residues. Residues 437–447 (SLPTFPSASGN) show a composition bias toward polar residues. Asn447 carries an N-linked (GlcNAc...) asparagine glycan.

Belongs to the CRISP family. Interacts with PSP94/MSMB. N-glycosylated. Expressed strongly in aorta and skin, and weakly in adipose tissue (at protein level). In heart, found in the extracellular space surrounding cardiomyocytes (at protein level).

Its subcellular location is the secreted. In terms of biological role, may inhibit cardiomyocyte growth. This chain is Peptidase inhibitor 16 (Pi16), found in Mus musculus (Mouse).